Here is a 1449-residue protein sequence, read N- to C-terminus: Conserved oligomeric Golgi complex subunit 1 (1449 aa).

Disordered stretches follow at residues 503–529, 916–960, 1303–1338, and 1401–1422; these read NSSG…NNSG, LDTI…INNN, KQSI…QQSD, and RNQQ…ILSP. Low complexity-rich tracts occupy residues 517–528 and 930–960; these read NTNNNNSNNNNS and THSS…INNN. The segment covering 1305 to 1322 has biased composition (polar residues); sequence SINGGQQSPPLATTSSNG. Residues 1401-1414 show a composition bias toward low complexity; it reads RNQQQQQQNNTNQQ.

The protein belongs to the COG1 family. As to quaternary structure, component of the conserved oligomeric Golgi complex which is composed of eight different subunits and is required for normal Golgi morphology and localization.

It is found in the golgi apparatus membrane. Its function is as follows. Required for normal Golgi function. This is Conserved oligomeric Golgi complex subunit 1 (cog1) from Dictyostelium discoideum (Social amoeba).